Reading from the N-terminus, the 238-residue chain is Survival of motor neuron-related-splicing factor 30 (238 aa).

The Tudor domain occupies 72-132 (SWKVGEKCMA…RPVEEGRKAK (61 aa)). The Nuclear localization signal signature appears at 142-160 (KKEMIAAQREYKKKKALKK).

This sequence belongs to the SMN family. As to quaternary structure, associates with spliceosomes.

The protein resides in the nucleus speckle. The protein localises to the nucleus. Its subcellular location is the cajal body. Functionally, involved in spliceosome assembly. In Xenopus tropicalis (Western clawed frog), this protein is Survival of motor neuron-related-splicing factor 30 (smndc1).